Reading from the N-terminus, the 162-residue chain is Ribosome maturation factor RimM (162 aa).

Residues 86–160 (EGRYYYFALI…SIHVDPIPGL (75 aa)) form the PRC barrel domain.

Belongs to the RimM family. Binds ribosomal protein uS19.

The protein resides in the cytoplasm. Its function is as follows. An accessory protein needed during the final step in the assembly of 30S ribosomal subunit, possibly for assembly of the head region. Essential for efficient processing of 16S rRNA. May be needed both before and after RbfA during the maturation of 16S rRNA. It has affinity for free ribosomal 30S subunits but not for 70S ribosomes. This chain is Ribosome maturation factor RimM, found in Thermus thermophilus (strain ATCC 27634 / DSM 579 / HB8).